Consider the following 290-residue polypeptide: Putative speedy protein-like protein 3 (290 aa).

Positions 16–50 are disordered; it reads GVDPSPPCRSLGWKRKKEWSDESEEEPEKELAPEP. Over residues 36–50 the composition is skewed to acidic residues; that stretch reads DESEEEPEKELAPEP.

The protein belongs to the Speedy/Ringo family.

The chain is Putative speedy protein-like protein 3 from Homo sapiens (Human).